The primary structure comprises 339 residues: Ureidoglycine carbamoyltransferase (339 aa).

The protein belongs to the aspartate/ornithine carbamoyltransferase superfamily. As to quaternary structure, homodimer.

The enzyme catalyses (S)-2-ureidoglycine + carbamoyl phosphate = allantoate + phosphate + H(+). Its pathway is purine metabolism. Its function is as follows. Catalyzes the phosphorolysis of allantoate to ureidoglycine and carbamoyl phosphate. Is likely involved in a purine degradation pathway. This chain is Ureidoglycine carbamoyltransferase, found in Rubrobacter xylanophilus (strain DSM 9941 / JCM 11954 / NBRC 16129 / PRD-1).